The following is a 145-amino-acid chain: D-aminoacyl-tRNA deacylase (145 aa).

The Gly-cisPro motif, important for rejection of L-amino acids signature appears at 137 to 138 (GP).

The protein belongs to the DTD family. As to quaternary structure, homodimer.

The protein resides in the cytoplasm. It catalyses the reaction glycyl-tRNA(Ala) + H2O = tRNA(Ala) + glycine + H(+). It carries out the reaction a D-aminoacyl-tRNA + H2O = a tRNA + a D-alpha-amino acid + H(+). Functionally, an aminoacyl-tRNA editing enzyme that deacylates mischarged D-aminoacyl-tRNAs. Also deacylates mischarged glycyl-tRNA(Ala), protecting cells against glycine mischarging by AlaRS. Acts via tRNA-based rather than protein-based catalysis; rejects L-amino acids rather than detecting D-amino acids in the active site. By recycling D-aminoacyl-tRNA to D-amino acids and free tRNA molecules, this enzyme counteracts the toxicity associated with the formation of D-aminoacyl-tRNA entities in vivo and helps enforce protein L-homochirality. The sequence is that of D-aminoacyl-tRNA deacylase from Shewanella putrefaciens (strain CN-32 / ATCC BAA-453).